The sequence spans 81 residues: Putative phytosulfokines 6 (81 aa).

An N-terminal signal peptide occupies residues 1–20; that stretch reads MKQSLCLAVLFLILSTSSSA. Residues 21–72 constitute a propeptide that is removed on maturation; sequence IRRGKEDQEINPLVSATSVEEDSVNKLMGMEYCGEGDEECLRRRMMTESHLD. Sulfotyrosine is present on residues tyrosine 73 and tyrosine 75. A propeptide spanning residues 78 to 81 is cleaved from the precursor; it reads HHKH.

It belongs to the phytosulfokine family. Post-translationally, sulfation is important for activity and for the binding to a putative membrane receptor. In terms of processing, PSK-beta is an enzymatic derivative of PSK-alpha. Expressed in roots, leaves, stems, flowers and siliques. Most abundant in vascular bundles and in root tips.

It is found in the secreted. Promotes plant cell differentiation, organogenesis and somatic embryogenesis as well as cell proliferation. In Arabidopsis thaliana (Mouse-ear cress), this protein is Putative phytosulfokines 6 (PSK6).